Here is a 301-residue protein sequence, read N- to C-terminus: Ribonuclease Z (301 aa).

The Zn(2+) site is built by His-60, His-62, Asp-64, His-65, His-137, Asp-207, and His-265. The active-site Proton acceptor is Asp-64.

Belongs to the RNase Z family. Homodimer. It depends on Zn(2+) as a cofactor.

The enzyme catalyses Endonucleolytic cleavage of RNA, removing extra 3' nucleotides from tRNA precursor, generating 3' termini of tRNAs. A 3'-hydroxy group is left at the tRNA terminus and a 5'-phosphoryl group is left at the trailer molecule.. Its function is as follows. Zinc phosphodiesterase, which displays some tRNA 3'-processing endonuclease activity. Probably involved in tRNA maturation, by removing a 3'-trailer from precursor tRNA. This is Ribonuclease Z from Exiguobacterium sp. (strain ATCC BAA-1283 / AT1b).